Consider the following 326-residue polypeptide: Undecaprenyl-phosphate 4-deoxy-4-formamido-L-arabinose transferase (326 aa).

Topologically, residues 1 to 235 (MFEIHPIKKV…TCLTTTPLRM (235 aa)) are cytoplasmic. The helical transmembrane segment at 236–256 (LSLLGSIIATSGFSLAILLVV) threads the bilayer. The Periplasmic portion of the chain corresponds to 257 to 269 (LRLAFGSQWSGEG). Residues 270–290 (VFMLFAVLFTFIGAQFIGMGL) form a helical membrane-spanning segment. Residues 291–326 (LGEYIGRIYNDVRARPRYFVQKVIRPASSIDIEENH) are Cytoplasmic-facing.

The protein belongs to the glycosyltransferase 2 family.

The protein resides in the cell inner membrane. The catalysed reaction is UDP-4-deoxy-4-formamido-beta-L-arabinose + di-trans,octa-cis-undecaprenyl phosphate = 4-deoxy-4-formamido-alpha-L-arabinopyranosyl di-trans,octa-cis-undecaprenyl phosphate + UDP. It functions in the pathway glycolipid biosynthesis; 4-amino-4-deoxy-alpha-L-arabinose undecaprenyl phosphate biosynthesis; 4-amino-4-deoxy-alpha-L-arabinose undecaprenyl phosphate from UDP-4-deoxy-4-formamido-beta-L-arabinose and undecaprenyl phosphate: step 1/2. The protein operates within bacterial outer membrane biogenesis; lipopolysaccharide biosynthesis. Catalyzes the transfer of 4-deoxy-4-formamido-L-arabinose from UDP to undecaprenyl phosphate. The modified arabinose is attached to lipid A and is required for resistance to polymyxin and cationic antimicrobial peptides. The sequence is that of Undecaprenyl-phosphate 4-deoxy-4-formamido-L-arabinose transferase from Escherichia fergusonii (strain ATCC 35469 / DSM 13698 / CCUG 18766 / IAM 14443 / JCM 21226 / LMG 7866 / NBRC 102419 / NCTC 12128 / CDC 0568-73).